A 337-amino-acid polypeptide reads, in one-letter code: Peroxidase 14 (337 aa).

The first 22 residues, methionine 1–cysteine 22, serve as a signal peptide directing secretion. Asparagine 24 carries N-linked (GlcNAc...) asparagine glycosylation. 4 disulfides stabilise this stretch: cysteine 44–cysteine 124, cysteine 77–cysteine 82, cysteine 130–cysteine 331, and cysteine 209–cysteine 241. Histidine 75 serves as the catalytic Proton acceptor. Aspartate 76, valine 79, glycine 81, aspartate 83, and serine 85 together coordinate Ca(2+). Proline 172 provides a ligand contact to substrate. Asparagine 191 carries an N-linked (GlcNAc...) asparagine glycan. Histidine 202 provides a ligand contact to heme b. Threonine 203 is a binding site for Ca(2+). N-linked (GlcNAc...) asparagine glycans are attached at residues asparagine 218 and asparagine 249. Ca(2+)-binding residues include aspartate 254, serine 257, and aspartate 262.

This sequence belongs to the peroxidase family. Classical plant (class III) peroxidase subfamily. It depends on heme b as a cofactor. Ca(2+) serves as cofactor.

It localises to the secreted. The enzyme catalyses 2 a phenolic donor + H2O2 = 2 a phenolic radical donor + 2 H2O. Removal of H(2)O(2), oxidation of toxic reductants, biosynthesis and degradation of lignin, suberization, auxin catabolism, response to environmental stresses such as wounding, pathogen attack and oxidative stress. These functions might be dependent on each isozyme/isoform in each plant tissue. The protein is Peroxidase 14 (PER14) of Arabidopsis thaliana (Mouse-ear cress).